We begin with the raw amino-acid sequence, 173 residues long: Inorganic pyrophosphatase (173 aa).

Residues Lys28, Arg42, and Tyr54 each coordinate substrate. Residues Asp64, Asp69, and Asp101 each coordinate Mg(2+). Position 140 (Tyr140) interacts with substrate.

This sequence belongs to the PPase family. Homohexamer. It depends on Mg(2+) as a cofactor.

The protein resides in the cytoplasm. The catalysed reaction is diphosphate + H2O = 2 phosphate + H(+). Its function is as follows. Catalyzes the hydrolysis of inorganic pyrophosphate (PPi) forming two phosphate ions. The polypeptide is Inorganic pyrophosphatase (Helicobacter pylori (strain J99 / ATCC 700824) (Campylobacter pylori J99)).